Reading from the N-terminus, the 136-residue chain is UPF0225 protein Mpe_A2093 (136 aa).

It belongs to the UPF0225 family.

The protein is UPF0225 protein Mpe_A2093 of Methylibium petroleiphilum (strain ATCC BAA-1232 / LMG 22953 / PM1).